The primary structure comprises 464 residues: Putative F-box/LRR-repeat protein At3g59160 (464 aa).

The F-box domain occupies 12 to 60 (KDMINDLPDALLCHVLSYLTTKEAASTSLLSRRWRYLLAFVPNLEFDDS). LRR repeat units lie at residues 172 to 198 (TLKIRDGPPIDVKHVHLPKLKTLHLES), 200 to 225 (MFDEEDIGFSKLLSGCPELEELVLHH), 233 to 258 (SCSVSVATLKRLTFCCNNMKFCGMHE), 336 to 367 (VLCLSADTLEVLTYCCKQIPIFNNLTHVTIQS), 368 to 393 (TPKVGWKSLLKLLKNSPKLQTLVFQG), and 408 to 433 (KIEKQIEKVKHFLETMPHLEQLVLHY).

The sequence is that of Putative F-box/LRR-repeat protein At3g59160 from Arabidopsis thaliana (Mouse-ear cress).